Here is a 199-residue protein sequence, read N- to C-terminus: MAEEQVLNTHNASILLSAANKSHYPQDDLPEIALAGRSNVGKSSFINTILGRKNLARTSSKPGKTQLLNFFNIDNKLRFVDVPGYGYAKVSKSERAKWGKMIEEYLTSRDNLRAVVSLVDLRHAPSKEDIQMYDFLKYYDIPVIVVATKADKIPRGKWNKHESVVKKALNFDKSDTFIVFSSVERIGIDDSWDAILEQV.

The EngB-type G domain occupies 28 to 199 (DLPEIALAGR…DSWDAILEQV (172 aa)). Residues 36–43 (GRSNVGKS), 63–67 (GKTQL), 81–84 (DVPG), 148–151 (TKAD), and 180–182 (FSS) each bind GTP. The Mg(2+) site is built by serine 43 and threonine 65.

It belongs to the TRAFAC class TrmE-Era-EngA-EngB-Septin-like GTPase superfamily. EngB GTPase family. Mg(2+) is required as a cofactor.

Necessary for normal cell division and for the maintenance of normal septation. This Streptococcus pyogenes serotype M6 (strain ATCC BAA-946 / MGAS10394) protein is Probable GTP-binding protein EngB.